The primary structure comprises 421 residues: Gamma-glutamyl phosphate reductase (421 aa).

The protein belongs to the gamma-glutamyl phosphate reductase family.

It localises to the cytoplasm. It catalyses the reaction L-glutamate 5-semialdehyde + phosphate + NADP(+) = L-glutamyl 5-phosphate + NADPH + H(+). It participates in amino-acid biosynthesis; L-proline biosynthesis; L-glutamate 5-semialdehyde from L-glutamate: step 2/2. Catalyzes the NADPH-dependent reduction of L-glutamate 5-phosphate into L-glutamate 5-semialdehyde and phosphate. The product spontaneously undergoes cyclization to form 1-pyrroline-5-carboxylate. The polypeptide is Gamma-glutamyl phosphate reductase (Ruegeria sp. (strain TM1040) (Silicibacter sp.)).